The chain runs to 379 residues: Pectin lyase A (379 aa).

Positions 1-20 (MKYSTIFSAAAAVFAGSAAA) are cleaved as a signal peptide. Disulfide bonds link Cys83-Cys102 and Cys92-Cys226. An O-linked (Man) threonine glycan is attached at Thr88. Asn129 carries N-linked (GlcNAc...) asparagine glycosylation. The active site involves Arg256. Cys322 and Cys330 are oxidised to a cystine. The O-linked (Man) serine; in strain 4M-147 glycan is linked to Ser368.

This sequence belongs to the polysaccharide lyase 1 family. N-glycosylated at Asn-129 and O-glycosylated at Thr-88 when expressed in Aspergillus nidulans. The protein from strain 4M-147 is O-glycosylated at Thr-88 and Ser-368. PubMed:9195887 modeled GalNAc at the O-glycosylation site, a glycosylation not observed in fungi. The O-linked saccharide is probably mannose.

The protein localises to the secreted. The enzyme catalyses Eliminative cleavage of (1-&gt;4)-alpha-D-galacturonan methyl ester to give oligosaccharides with 4-deoxy-6-O-methyl-alpha-D-galact-4-enuronosyl groups at their non-reducing ends.. In terms of biological role, pectinolytic enzymes consist of four classes of enzymes: pectin lyase, polygalacturonase, pectin methylesterase and rhamnogalacturonase. Among pectinolytic enzymes, pectin lyase is the most important in depolymerization of pectin, since it cleaves internal glycosidic bonds of highly methylated pectins. The protein is Pectin lyase A (pelA) of Aspergillus niger.